We begin with the raw amino-acid sequence, 308 residues long: Tyramine--L-glutamate ligase (308 aa).

Residues 89 to 291 enclose the ATP-grasp domain; it reads KSLLKSENID…LAELLIKNAN (203 aa). An ATP-binding site is contributed by 115–192; it reads TKIIESYPVK…QEFIDGENLS (78 aa). Positions 252, 264, and 266 each coordinate Mg(2+). Residues Asp252, Glu264, and Asn266 each coordinate Mn(2+).

It depends on Mg(2+) as a cofactor. Requires Mn(2+) as cofactor.

It carries out the reaction tyramine + L-glutamate + ATP = gamma-L-glutamyltyramine + ADP + phosphate + H(+). It functions in the pathway cofactor biosynthesis; methanofuran biosynthesis. Its function is as follows. Catalyzes the formation of an amide bond between tyramine and the gamma carboxy group of L-glutamate. The enzyme also accepts phenylethylamine in vitro. The polypeptide is Tyramine--L-glutamate ligase (mfnD) (Methanocaldococcus jannaschii (strain ATCC 43067 / DSM 2661 / JAL-1 / JCM 10045 / NBRC 100440) (Methanococcus jannaschii)).